Reading from the N-terminus, the 227-residue chain is Phosphoribosylformylglycinamidine synthase subunit PurQ (227 aa).

Positions 2–227 (RWAIVRFPGA…FLGLVKEVAR (226 aa)) constitute a Glutamine amidotransferase type-1 domain. Residue Cys-85 is the Nucleophile of the active site. Catalysis depends on residues His-200 and Glu-202.

Part of the FGAM synthase complex composed of 1 PurL, 1 PurQ and 2 PurS subunits.

The protein localises to the cytoplasm. The enzyme catalyses N(2)-formyl-N(1)-(5-phospho-beta-D-ribosyl)glycinamide + L-glutamine + ATP + H2O = 2-formamido-N(1)-(5-O-phospho-beta-D-ribosyl)acetamidine + L-glutamate + ADP + phosphate + H(+). It carries out the reaction L-glutamine + H2O = L-glutamate + NH4(+). Its pathway is purine metabolism; IMP biosynthesis via de novo pathway; 5-amino-1-(5-phospho-D-ribosyl)imidazole from N(2)-formyl-N(1)-(5-phospho-D-ribosyl)glycinamide: step 1/2. Its function is as follows. Part of the phosphoribosylformylglycinamidine synthase complex involved in the purines biosynthetic pathway. Catalyzes the ATP-dependent conversion of formylglycinamide ribonucleotide (FGAR) and glutamine to yield formylglycinamidine ribonucleotide (FGAM) and glutamate. The FGAM synthase complex is composed of three subunits. PurQ produces an ammonia molecule by converting glutamine to glutamate. PurL transfers the ammonia molecule to FGAR to form FGAM in an ATP-dependent manner. PurS interacts with PurQ and PurL and is thought to assist in the transfer of the ammonia molecule from PurQ to PurL. The polypeptide is Phosphoribosylformylglycinamidine synthase subunit PurQ (Thermus thermophilus (strain ATCC 27634 / DSM 579 / HB8)).